The sequence spans 172 residues: Transcriptional repressor NrdR (172 aa).

A zinc finger spans residues 3-34; it reads CPFCSYSDNRVLESRLAEEGESVRRRRECKQC. Residues 49-139 enclose the ATP-cone domain; the sequence is TVVIKRNGRR…VYRKFKGVAD (91 aa).

The protein belongs to the NrdR family. It depends on Zn(2+) as a cofactor.

In terms of biological role, negatively regulates transcription of bacterial ribonucleotide reductase nrd genes and operons by binding to NrdR-boxes. This chain is Transcriptional repressor NrdR, found in Gloeobacter violaceus (strain ATCC 29082 / PCC 7421).